Consider the following 730-residue polypeptide: Regulatory factor X 4 (730 aa).

Over residues 30-41 (YSSHTSLGNISN) the composition is skewed to polar residues. Residues 30–59 (YSSHTSLGNISNDETDEEKENRASKPHSTP) form a disordered region. A DNA-binding region (RFX-type winged-helix) is located at residues 61–136 (TLQWLGENYE…YHYYGIAVKE (76 aa)). Positions 500 to 532 (EPAISTPSPVPFSPAASSSSVEIPSATSPVSNQ) are disordered. Residues 512-528 (SPAASSSSVEIPSATSP) are compositionally biased toward low complexity.

It belongs to the RFX family.

The protein localises to the nucleus. Functionally, required for neural tube ciliogenesis during embryogenesis. This Xenopus laevis (African clawed frog) protein is Regulatory factor X 4.